Consider the following 95-residue polypeptide: Co-chaperonin GroES (95 aa).

Belongs to the GroES chaperonin family. Heptamer of 7 subunits arranged in a ring. Interacts with the chaperonin GroEL.

Its subcellular location is the cytoplasm. Together with the chaperonin GroEL, plays an essential role in assisting protein folding. The GroEL-GroES system forms a nano-cage that allows encapsulation of the non-native substrate proteins and provides a physical environment optimized to promote and accelerate protein folding. GroES binds to the apical surface of the GroEL ring, thereby capping the opening of the GroEL channel. The protein is Co-chaperonin GroES of Streptococcus mutans serotype c (strain ATCC 700610 / UA159).